A 357-amino-acid polypeptide reads, in one-letter code: Non-structural protein NS2 (357 aa).

2 disordered regions span residues 163 to 199 (NERE…AREM) and 228 to 267 (LDEK…PKTH). Acidic residues-rich tracts occupy residues 230–241 (EKDEEDGDERED) and 250–260 (DDDEQGEDASD).

The protein belongs to the orbivirus non-structural protein NS2 family.

Functionally, single-stranded RNA-binding protein. This chain is Non-structural protein NS2 (Segment-8), found in Antilocapra americana (Pronghorn).